Here is a 314-residue protein sequence, read N- to C-terminus: Ribosomal protein L11 methyltransferase (314 aa).

S-adenosyl-L-methionine-binding residues include Thr-161, Gly-182, Asp-204, and Asn-248.

Belongs to the methyltransferase superfamily. PrmA family.

It localises to the cytoplasm. The enzyme catalyses L-lysyl-[protein] + 3 S-adenosyl-L-methionine = N(6),N(6),N(6)-trimethyl-L-lysyl-[protein] + 3 S-adenosyl-L-homocysteine + 3 H(+). In terms of biological role, methylates ribosomal protein L11. The polypeptide is Ribosomal protein L11 methyltransferase (Listeria monocytogenes serotype 4b (strain CLIP80459)).